Here is a 166-residue protein sequence, read N- to C-terminus: Small ribosomal subunit protein uS5 (166 aa).

Positions 11-74 (FLEKLIAVNR…EKARRNMVDV (64 aa)) constitute an S5 DRBM domain.

Belongs to the universal ribosomal protein uS5 family. As to quaternary structure, part of the 30S ribosomal subunit. Contacts proteins S4 and S8.

With S4 and S12 plays an important role in translational accuracy. In terms of biological role, located at the back of the 30S subunit body where it stabilizes the conformation of the head with respect to the body. This Alteromonas mediterranea (strain DSM 17117 / CIP 110805 / LMG 28347 / Deep ecotype) protein is Small ribosomal subunit protein uS5.